The following is a 549-amino-acid chain: Glucose-6-phosphate isomerase (549 aa).

The Proton donor role is filled by Glu-355. Active-site residues include His-386 and Lys-514.

It belongs to the GPI family.

Its subcellular location is the cytoplasm. It catalyses the reaction alpha-D-glucose 6-phosphate = beta-D-fructose 6-phosphate. It participates in carbohydrate biosynthesis; gluconeogenesis. It functions in the pathway carbohydrate degradation; glycolysis; D-glyceraldehyde 3-phosphate and glycerone phosphate from D-glucose: step 2/4. Catalyzes the reversible isomerization of glucose-6-phosphate to fructose-6-phosphate. The polypeptide is Glucose-6-phosphate isomerase (Salmonella choleraesuis (strain SC-B67)).